A 230-amino-acid polypeptide reads, in one-letter code: Ribonuclease HII (230 aa).

Positions 21–212 constitute an RNase H type-2 domain; it reads GPVAGVDEVG…VRRVANGSGG (192 aa). The a divalent metal cation site is built by D27, E28, and D121.

This sequence belongs to the RNase HII family. The cofactor is Mn(2+). Mg(2+) is required as a cofactor.

The protein resides in the cytoplasm. It carries out the reaction Endonucleolytic cleavage to 5'-phosphomonoester.. Its function is as follows. Endonuclease that specifically degrades the RNA of RNA-DNA hybrids. The sequence is that of Ribonuclease HII from Mycobacterium avium (strain 104).